The following is a 1091-amino-acid chain: Multiple epidermal growth factor-like domains protein 11 (1091 aa).

The first 18 residues, 1–18 (MAPSAVGLLVFLLQAALA), serve as a signal peptide directing secretion. At 19 to 847 (LNPEDPNVCS…SPALGAERHS (829 aa)) the chain is on the extracellular side. The region spanning 23–100 (DPNVCSHWES…YYENGDFCIP (78 aa)) is the EMI domain. Disulfide bonds link Cys27/Cys88, Cys53/Cys62, Cys87/Cys98, Cys102/Cys117, Cys119/Cys128, Cys145/Cys153, Cys147/Cys160, Cys162/Cys171, Cys184/Cys196, Cys190/Cys203, Cys205/Cys214, Cys227/Cys239, Cys233/Cys246, and Cys248/Cys257. EGF-like domains follow at residues 94-129 (NGDF…PDCS), 142-172 (SNRC…WRCE), 180-215 (HGKG…VYCE), 223-258 (HGAH…AVCA), 266-301 (FGQN…DRCQ), 314-344 (SQRC…PSCQ), 398-433 (YGNG…EVCA), 441-476 (YGPN…LDCS), and 484-519 (WGLN…DSCE). Residue Asn269 is glycosylated (N-linked (GlcNAc...) asparagine). Intrachain disulfides connect Cys270–Cys282, Cys276–Cys289, Cys291–Cys300, Cys317–Cys325, Cys319–Cys332, Cys334–Cys343, Cys402–Cys414, Cys408–Cys421, Cys423–Cys432, Cys445–Cys457, Cys451–Cys464, Cys466–Cys475, Cys488–Cys500, Cys494–Cys507, and Cys509–Cys518. An N-linked (GlcNAc...) asparagine glycan is attached at Asn530. 6 EGF-like domains span residues 570-605 (WGPN…PLCQ), 613-650 (YGHG…ALCN), 658-693 (FGQD…KDCS), 706-736 (FHTC…LFCT), 749-779 (GHIC…RHCE), and 787-822 (FGYG…IRCD). Disulfide bonds link Cys574-Cys586, Cys580-Cys593, Cys595-Cys604, Cys617-Cys631, Cys621-Cys638, Cys640-Cys649, Cys662-Cys674, Cys668-Cys681, Cys683-Cys692, Cys709-Cys717, Cys711-Cys724, Cys726-Cys735, Cys752-Cys760, Cys754-Cys767, Cys769-Cys778, Cys791-Cys803, Cys797-Cys810, and Cys812-Cys821. Residues 848-868 (VGAVTGIVLLLFLVVVLLGLF) form a helical membrane-spanning segment. The Cytoplasmic segment spans residues 869–1091 (AWRRRRQKEK…NIYEVGRCLT (223 aa)).

This sequence belongs to the MEGF family. As to quaternary structure, homomer. Does not interact with MEGF10.

It is found in the cell membrane. Its subcellular location is the basolateral cell membrane. May regulate the mosaic spacing of specific neuron subtypes in the retina through homotypic retinal neuron repulsion. Mosaics provide a mechanism to distribute each cell type evenly across the retina, ensuring that all parts of the visual field have access to a full set of processing elements. The sequence is that of Multiple epidermal growth factor-like domains protein 11 (Megf11) from Mus musculus (Mouse).